A 397-amino-acid chain; its full sequence is MKGEETLKKALLNIGKESPFYYYVLLGVKLVPSKNTRNLKLSFSTTGDVMLLYNPEAIGKKPLRMVQALLIHEVMHIVLQHFRIKPKDERDRKIWDLAMDAAINQYIPELAAFGVPLDVLVKEGHTTDNDTLFVLPPEWMMFENAEMYHKWILEEMERLGRYDVEVVAEFRDNVDDHSGLFEEDVPVEMILDLTKDRTKKAFNLFGNTLPSGVRREVSLSLENPELDWKTLLRRFFGVSIKADRYTTPLRPNRRYDHLPGWRNEYLPRIAAVVDTSGSIVEKELNQFISELEKISNIAGEELWLVQVDKSVTSAMKYRSGKWKDLEIVGGGSTDLQPAIDYSERVLRSEGTVVFTDGHTDVPIARRRILFVLSRYHNEEFLKEARKMYGRDAVVVLS.

This is an uncharacterized protein from Thermotoga maritima (strain ATCC 43589 / DSM 3109 / JCM 10099 / NBRC 100826 / MSB8).